The sequence spans 196 residues: Holliday junction branch migration complex subunit RuvA (196 aa).

The domain I stretch occupies residues 1–69; it reads MIVGLRGTII…EDAHLLFGFC (69 aa). The domain II stretch occupies residues 70–148; sequence EEIEKQTFER…QLLQSQEESI (79 aa). The tract at residues 149–157 is flexible linker; sequence APSNNLKYE. The interval 157–196 is domain III; that stretch reads EASLALQSLGFKRNEIQKVLEHIEALSVSEIVKEALKRLA.

This sequence belongs to the RuvA family. As to quaternary structure, homotetramer. Forms an RuvA(8)-RuvB(12)-Holliday junction (HJ) complex. HJ DNA is sandwiched between 2 RuvA tetramers; dsDNA enters through RuvA and exits via RuvB. An RuvB hexamer assembles on each DNA strand where it exits the tetramer. Each RuvB hexamer is contacted by two RuvA subunits (via domain III) on 2 adjacent RuvB subunits; this complex drives branch migration. In the full resolvosome a probable DNA-RuvA(4)-RuvB(12)-RuvC(2) complex forms which resolves the HJ.

It is found in the cytoplasm. Its function is as follows. The RuvA-RuvB-RuvC complex processes Holliday junction (HJ) DNA during genetic recombination and DNA repair, while the RuvA-RuvB complex plays an important role in the rescue of blocked DNA replication forks via replication fork reversal (RFR). RuvA specifically binds to HJ cruciform DNA, conferring on it an open structure. The RuvB hexamer acts as an ATP-dependent pump, pulling dsDNA into and through the RuvAB complex. HJ branch migration allows RuvC to scan DNA until it finds its consensus sequence, where it cleaves and resolves the cruciform DNA. The sequence is that of Holliday junction branch migration complex subunit RuvA from Helicobacter hepaticus (strain ATCC 51449 / 3B1).